The sequence spans 447 residues: Cytochrome c biogenesis protein CcsB (447 aa).

A run of 3 helical transmembrane segments spans residues 28–48, 87–107, and 173–193; these read LRLA…GTVI, TWWY…CTFR, and IGPI…IWGA.

The protein belongs to the Ccs1/CcsB family. May interact with CcsA.

The protein resides in the cellular thylakoid membrane. In terms of biological role, required during biogenesis of c-type cytochromes (cytochrome c6 and cytochrome f) at the step of heme attachment. This is Cytochrome c biogenesis protein CcsB from Microcystis aeruginosa (strain NIES-843 / IAM M-2473).